The sequence spans 103 residues: Large ribosomal subunit protein bL21 (103 aa).

It belongs to the bacterial ribosomal protein bL21 family. As to quaternary structure, part of the 50S ribosomal subunit. Contacts protein L20.

Its function is as follows. This protein binds to 23S rRNA in the presence of protein L20. This chain is Large ribosomal subunit protein bL21, found in Thioalkalivibrio sulfidiphilus (strain HL-EbGR7).